An 89-amino-acid chain; its full sequence is Small ribosomal subunit protein uS17 (89 aa).

This sequence belongs to the universal ribosomal protein uS17 family. Part of the 30S ribosomal subunit.

Functionally, one of the primary rRNA binding proteins, it binds specifically to the 5'-end of 16S ribosomal RNA. The chain is Small ribosomal subunit protein uS17 from Nocardia farcinica (strain IFM 10152).